Reading from the N-terminus, the 218-residue chain is Peroxynitrite isomerase 2 (218 aa).

The interval 1 to 24 (MTPAGDTPERGSGDRAVAEAAERA) is disordered. Over residues 7 to 24 (TPERGSGDRAVAEAAERA) the composition is skewed to basic and acidic residues. Positions 65 to 71 (GVWRGEG) match the GXWXGXG motif. Heme b is bound by residues lysine 181 and histidine 208.

Belongs to the nitrobindin family. Homodimer. Requires heme b as cofactor.

The catalysed reaction is peroxynitrite = nitrate. It participates in nitrogen metabolism. Functionally, heme-binding protein able to scavenge peroxynitrite and to protect free L-tyrosine against peroxynitrite-mediated nitration, by acting as a peroxynitrite isomerase that converts peroxynitrite to nitrate. Therefore, this protein likely plays a role in peroxynitrite sensing and in the detoxification of reactive nitrogen and oxygen species (RNS and ROS, respectively). Is able to bind nitric oxide (NO) in vitro, but may act as a sensor of peroxynitrite levels in vivo. This Mycolicibacterium smegmatis (strain ATCC 700084 / mc(2)155) (Mycobacterium smegmatis) protein is Peroxynitrite isomerase 2.